A 97-amino-acid chain; its full sequence is RxLR effector protein CRE10 (97 aa).

A signal peptide spans 1–21 (MRLSYILVVVIAVTLQACVCA). A RxLR-dEER motif is present at residues 48–66 (RLLRGVKKRTAEREVQEER).

Belongs to the RxLR effector family.

It is found in the secreted. The protein resides in the host cell. Its function is as follows. Effector that is involved in host plant infection. Contributes to virulence during the early infection stage, by inhibiting plant defense responses induced by both PAMP-triggered immunity (PTI) and effector-triggered immunity (ETI). The polypeptide is RxLR effector protein CRE10 (Phytophthora infestans (strain T30-4) (Potato late blight agent)).